Reading from the N-terminus, the 329-residue chain is Ubiquinol oxidase 1c, mitochondrial (329 aa).

Residues 1–45 constitute a mitochondrion transit peptide; that stretch reads MITTLLRRSLLDASKQATSINGILFHQLAPAKYFRVPAVGGLRDF. A helical transmembrane segment spans residues 154 to 174; that stretch reads AIMLETVAAVPGMVGGMLMHF. Residues Glu-158, Glu-197, and His-200 each coordinate Fe cation. The helical transmembrane segment at 216-236 threads the bilayer; the sequence is ALVISVQGVFFNAYLIGYIIS. The Fe cation site is built by Glu-248, Glu-299, and His-302.

It belongs to the alternative oxidase family. Homodimer; disulfide-linked. Fe cation serves as cofactor. In terms of tissue distribution, expressed in roots, stems, leaves, cotyledons and flowers. High expression in stamens.

Its subcellular location is the mitochondrion inner membrane. It catalyses the reaction 2 a ubiquinol + O2 = 2 a ubiquinone + 2 H2O. Catalyzes the cyanide-resistant oxidation of ubiquinol and the reduction of molecular oxygen to water, but does not translocate protons and consequently is not linked to oxidative phosphorylation. May increase respiration when the cytochrome respiratory pathway is restricted, or in response to low temperatures. This is Ubiquinol oxidase 1c, mitochondrial (AOX1C) from Arabidopsis thaliana (Mouse-ear cress).